The sequence spans 216 residues: Pyridoxine/pyridoxamine 5'-phosphate oxidase (216 aa).

Residues 12–15 and Lys70 contribute to the substrate site; that span reads RREY. Residues 65–70, 80–81, Arg86, Lys87, and Gln109 each bind FMN; these read RLVLLK and YT. Residues Tyr127, Arg131, and Ser135 each coordinate substrate. FMN-binding positions include 144–145 and Trp189; that span reads QS. A substrate-binding site is contributed by 195-197; it reads RMH. Residue Arg199 coordinates FMN.

This sequence belongs to the pyridoxamine 5'-phosphate oxidase family. In terms of assembly, homodimer. Requires FMN as cofactor.

It catalyses the reaction pyridoxamine 5'-phosphate + O2 + H2O = pyridoxal 5'-phosphate + H2O2 + NH4(+). The enzyme catalyses pyridoxine 5'-phosphate + O2 = pyridoxal 5'-phosphate + H2O2. The protein operates within cofactor metabolism; pyridoxal 5'-phosphate salvage; pyridoxal 5'-phosphate from pyridoxamine 5'-phosphate: step 1/1. It participates in cofactor metabolism; pyridoxal 5'-phosphate salvage; pyridoxal 5'-phosphate from pyridoxine 5'-phosphate: step 1/1. Functionally, catalyzes the oxidation of either pyridoxine 5'-phosphate (PNP) or pyridoxamine 5'-phosphate (PMP) into pyridoxal 5'-phosphate (PLP). The polypeptide is Pyridoxine/pyridoxamine 5'-phosphate oxidase (Sodalis glossinidius (strain morsitans)).